The sequence spans 298 residues: Proton-activated chloride channel (298 aa).

Topologically, residues 1 to 12 (MPIGFNKACLKN) are cytoplasmic. A helical transmembrane segment spans residues 13–33 (VFTVILVLIYLALTAVAVFLA). Residues 34–245 (YQTISDFMDK…RDPFIQQVKD (212 aa)) are Extracellular-facing. The chain crosses the membrane as a helical span at residues 246-266 (IVTANPWNTIAILCGVFMALF). The Cytoplasmic segment spans residues 267-298 (KAADFAKLSIKWMIRIRKRHIRAKMREMNQIS).

It belongs to the proton-activated chloride channel family.

It is found in the cell membrane. It carries out the reaction chloride(in) = chloride(out). Its function is as follows. Chloride channel gated by pH that facilitates the entry of chloride ions into cells upon exposure to extracellular acidic pH. Displays channel activity with distinct kinetic properties compared to the human ortholog channel. This is Proton-activated chloride channel from Danio rerio (Zebrafish).